We begin with the raw amino-acid sequence, 141 residues long: Ribosomal RNA large subunit methyltransferase H (141 aa).

Residue Gly88 coordinates S-adenosyl-L-methionine.

The protein belongs to the RNA methyltransferase RlmH family. Homodimer.

It localises to the cytoplasm. It carries out the reaction pseudouridine(1915) in 23S rRNA + S-adenosyl-L-methionine = N(3)-methylpseudouridine(1915) in 23S rRNA + S-adenosyl-L-homocysteine + H(+). Functionally, specifically methylates the pseudouridine at position 1915 (m3Psi1915) in 23S rRNA. This chain is Ribosomal RNA large subunit methyltransferase H, found in Novosphingobium aromaticivorans (strain ATCC 700278 / DSM 12444 / CCUG 56034 / CIP 105152 / NBRC 16084 / F199).